Reading from the N-terminus, the 83-residue chain is MASQQEKKQLDERAKKGETVVPGGTGGKSFEAQQHLAEGRSRGGNTRKEQLGSEGYQQMGRKGGSTPDKTDKEDAEDEPSTRT.

Basic and acidic residues-rich tracts occupy residues 1–18 (MASQ…KKGE) and 37–51 (AEGR…KEQL). The disordered stretch occupies residues 1-83 (MASQQEKKQL…DAEDEPSTRT (83 aa)). Residues 73–83 (EDAEDEPSTRT) are compositionally biased toward acidic residues.

Belongs to the small hydrophilic plant seed protein family.

The protein resides in the cytoplasm. Functionally, this protein may play a role in equipping the seed for survival, maintaining a minimal level of hydration in the dry organism and preventing the denaturation of cytoplasmic components, or may play a role during imbibition by controlling water uptake. This chain is Late seed maturation protein P8B6, found in Raphanus sativus (Radish).